The sequence spans 886 residues: Extended synaptotagmin-3 (886 aa).

The tract at residues 1–21 is disordered; it reads MRAEEPCAPGAPSALGAQRTP. Residues 1–29 lie on the Cytoplasmic side of the membrane; sequence MRAEEPCAPGAPSALGAQRTPGPELRLSS. 2 helical membrane passes run 30-50 and 51-71; these read QLLP…GPVY and LAGY…LWMW. Residues 72–886 are Cytoplasmic-facing; it reads WRRNRRGKLG…ELTPNGQPRS (815 aa). In terms of domain architecture, SMP-LTD spans 114-291; that stretch reads DVERVEWANK…LPNRVTVPVK (178 aa). C2 domains lie at 291–408 and 426–566; these read KKGL…DEWF and SLLT…QLDH. Ca(2+)-binding residues include Lys321, Asp322, Asp332, Asp379, Glu380, Asp381, Asp383, Asp385, and Asp386. The segment at 613–673 is disordered; the sequence is QGPKAQPQEE…PEPKGKDSAK (61 aa). A compositionally biased stretch (low complexity) spans 642 to 659; it reads RSTTTTTSATTVATEPTS. Residues 664 to 673 are compositionally biased toward basic and acidic residues; it reads PEPKGKDSAK. The region spanning 754-876 is the C2 3 domain; it reads QLGEIQLTVR…DLIKGFSQWY (123 aa). Residues 801 to 808 are required for phosphatidylinositol 4,5-bisphosphate-dependent location at the cell membrane; the sequence is RKWACRKK.

The protein belongs to the extended synaptotagmin family. As to quaternary structure, interacts with ESYT1 and ESYT2. In terms of tissue distribution, widely expressed with high level in cerebellum and skin.

It is found in the cell membrane. It localises to the endoplasmic reticulum membrane. Functionally, binds glycerophospholipids in a barrel-like domain and may play a role in cellular lipid transport. Tethers the endoplasmic reticulum to the cell membrane and promotes the formation of appositions between the endoplasmic reticulum and the cell membrane. The protein is Extended synaptotagmin-3 of Homo sapiens (Human).